Reading from the N-terminus, the 347-residue chain is MDVPGVNTTSANTTFSPGTSTLCVRDYKITQVLFPLLYTVLFFAGLITNSLAMRIFFQIRSKSNFIIFLKNTVISDLLMILTFPFKILSDAKLGAGPLRTLVCQVTSVTFYFTMYISISFLGLITIDRYLKTTRPFKTSSPSNLLGAKILSVVIWAFMFLISLPNMILTNRRPKDKDVTKCSFLKSEFGLVWHEIVNYICQVIFWINFLIVIVCYSLITKELYRSYVRTRGSAKVPKKKVNVKVFIIIAVFFICFVPFHFARIPYTLSQTRAVFDCSAENTLFYVKESTLWLTSLNACLDPFIYFFLCKSFRNSLTSMLRCSNSTSTSGTNKKKGQEGGEPSEETPM.

The Extracellular segment spans residues 1 to 33 (MDVPGVNTTSANTTFSPGTSTLCVRDYKITQVL). Residues N7 and N12 are each glycosylated (N-linked (GlcNAc...) asparagine). 2 cysteine pairs are disulfide-bonded: C23/C276 and C103/C181. The helical transmembrane segment at 34-56 (FPLLYTVLFFAGLITNSLAMRIF) threads the bilayer. Residues 57–67 (FQIRSKSNFII) are Cytoplasmic-facing. S61 and S63 each carry phosphoserine. Residues 68–88 (FLKNTVISDLLMILTFPFKIL) form a helical membrane-spanning segment. Residues 89–103 (SDAKLGAGPLRTLVC) lie on the Extracellular side of the membrane. ADP contacts are provided by R99, C103, and Y111. The chain crosses the membrane as a helical span at residues 104-124 (QVTSVTFYFTMYISISFLGLI). At 125-148 (TIDRYLKTTRPFKTSSPSNLLGAK) the chain is on the cytoplasmic side. A helical transmembrane segment spans residues 149–168 (ILSVVIWAFMFLISLPNMIL). Residues 162–165 (SLPN), 181–185 (CSFLK), H193, and N197 each bind ADP. The Extracellular segment spans residues 169-191 (TNRRPKDKDVTKCSFLKSEFGLV). The helical transmembrane segment at 192–213 (WHEIVNYICQVIFWINFLIVIV) threads the bilayer. The Cytoplasmic portion of the chain corresponds to 214–239 (CYSLITKELYRSYVRTRGSAKVPKKK). A helical transmembrane segment spans residues 240–265 (VNVKVFIIIAVFFICFVPFHFARIPY). ADP-binding positions include 262–265 (RIPY), Q269, and K286. Over 266-284 (TLSQTRAVFDCSAENTLFY) the chain is Extracellular. Residues 285–304 (VKESTLWLTSLNACLDPFIY) form a helical membrane-spanning segment. The Cytoplasmic segment spans residues 305–347 (FFLCKSFRNSLTSMLRCSNSTSTSGTNKKKGQEGGEPSEETPM). A disordered region spans residues 321-347 (CSNSTSTSGTNKKKGQEGGEPSEETPM).

It belongs to the G-protein coupled receptor 1 family.

The protein localises to the cell membrane. Its function is as follows. Receptor for ADP and ATP coupled to G-proteins that inhibit the adenylyl cyclase second messenger system. Required for normal platelet aggregation and blood coagulation. This chain is P2Y purinoceptor 12 (P2ry12), found in Mus musculus (Mouse).